A 530-amino-acid polypeptide reads, in one-letter code: MSNVKKHVSTINPVGEVLDVGSADEVQWSDASDVVVVGWGGAGASAAIEAREQGAEVLVIERFSGGGASVLSGGVVYAGAVPATRRKPASRFTEAMTAYLKHEVNGVVSDETLARFSRDSVTNLNWLEKQGATFASTMPGYKTSYPADGMYLYYSGNEVVPAYGNPQLLKKPPPRGHRVVAKGQSGAMFFAALQKSTLAHGARTLTQARVQRLVREKDSGRVLGVEVMVLPEGDPRTERHKKLDELVAKSACIRRRVPRRVAVNVRRSRARSARSATSVPAKVWCCPLAAISSIRNCWSMRRYKPGWLTGAAGCDGSGLRLGQSVGGIAQDLNNISAWRFITPPSVWPKGLVVNIQGERFCNEQVYGAKLGYEMMEKQGGQAWLIIDSNVRRQAAWQCLFGGLWAFQSMPALALMYKVAIKGKSVDDLAKKLRMDAAVLQLQFDRANAPARGEIEDPLGKSQDMRHEFKGGSLFAIDISISQKMFPLAVLSLGGLKVNEDNGAVIDGAGYDIPGLYAAGVPPLVWLPRVT.

33-62 provides a ligand contact to FAD; the sequence is DVVVVGWGGAGASAAIEAREQGAEVLVIER. A helical transmembrane segment spans residues 395-415; it reads AWQCLFGGLWAFQSMPALALM.

Belongs to the FAD-dependent oxidoreductase 2 family. It depends on FAD as a cofactor.

The protein localises to the membrane. It catalyses the reaction a 3-oxo-5alpha-steroid + A = a 3-oxo-Delta(4)-steroid + AH2. It carries out the reaction 5alpha-androstan-3,17-dione + A = androst-4-ene-3,17-dione + AH2. The enzyme catalyses 5alpha-androst-1-ene-3,17-dione + A = androsta-1,4-diene-3,17-dione + AH2. With respect to regulation, inhibition occurs with substrate concentrations above 25 uM. Involved in the degradation of steroids having an A:B ring fusion in a trans configuration. Catalyzes the elimination of hydrogens located at positions 4 and 5 and the introduction of double bonds into ring A. This Comamonas testosteroni (Pseudomonas testosteroni) protein is 3-oxo-5-alpha-steroid 4-dehydrogenase.